We begin with the raw amino-acid sequence, 639 residues long: MKIINIGILAHVDAGKTTLTESLLYASGAISEPGSVEKGTTRTDTMFLERQRGITIQAAVTSFQWHRCKVNIVDTPGHMDFLAEVYRSLAVLDGAILVISAKDGVQAQTRILFHALRKMNIPTVIFINKIDQAGVDLQSVVQSVRDKLSADIIIKQTVSLSPEIVLEENTDIEAWDAVIENNDELLEKYIAGEPISREKLAREEQQRVQDASLFPVYHGSAKNGLGIQPLMDAVTGLFQPIGEQGGAALCGSVFKVEYTDCGQRRVYLRLYSGTLRLRDTVALAGREKLKITEMRIPSKGEIVRTDTAYQGEIVILPSDSVRLNDVLGDQTRLPRKRWREDPLPMLRTTIAPKTAAQRERLLDALTQLADTDPLLRCEVDSITHEIILSFLGRVQLEVVSALLSEKYKLETVVKEPSVIYMERPLKAASHTIHIEVPPNPFWASIGLSVTPLSLGSGVQYESRVSLGYLNQSFQNAVRDGIRYGLEQGLFGWNVTDCKICFEYGLYYSPVSTPADFRSLAPIVLEQALKESGTQLLEPYLSFILYAPQEYLSRAYHDAPKYCATIETAQVKKDEVVFTGEIPARCIQAYRTDLAFYTNGRSVCLTELKGYQAAVGQPVIQPRRPNSRLDKVRHMFQKVM.

The region spanning 1–243 (MKIINIGILA…VTGLFQPIGE (243 aa)) is the tr-type G domain. Residues 10-17 (AHVDAGKT), 74-78 (DTPGH), and 128-131 (NKID) contribute to the GTP site.

This sequence belongs to the TRAFAC class translation factor GTPase superfamily. Classic translation factor GTPase family. TetM/TetO subfamily.

Abolishes the inhibitory effect of tetracyclin on protein synthesis by a non-covalent modification of the ribosomes. This Butyrivibrio fibrisolvens protein is Tetracycline resistance protein TetW (tetW).